The chain runs to 429 residues: Ribosomal RNA small subunit methyltransferase B (429 aa).

S-adenosyl-L-methionine contacts are provided by residues 254-260, aspartate 277, aspartate 303, and aspartate 322; that span reads CAAPGGK. Cysteine 375 functions as the Nucleophile in the catalytic mechanism.

The protein belongs to the class I-like SAM-binding methyltransferase superfamily. RsmB/NOP family.

It is found in the cytoplasm. The enzyme catalyses cytidine(967) in 16S rRNA + S-adenosyl-L-methionine = 5-methylcytidine(967) in 16S rRNA + S-adenosyl-L-homocysteine + H(+). Its function is as follows. Specifically methylates the cytosine at position 967 (m5C967) of 16S rRNA. The protein is Ribosomal RNA small subunit methyltransferase B of Serratia proteamaculans (strain 568).